Here is a 334-residue protein sequence, read N- to C-terminus: Pre-mRNA leakage protein 39 (334 aa).

In terms of assembly, interacts with MLP1 and MLP2.

The protein localises to the nucleus membrane. Functionally, involved in the nuclear retention of improperly spliced pre-mRNAs. This chain is Pre-mRNA leakage protein 39 (PML39), found in Saccharomyces cerevisiae (strain ATCC 204508 / S288c) (Baker's yeast).